The chain runs to 400 residues: Tryptophan--tRNA ligase, cytoplasmic (400 aa).

The 'HIGH' region motif lies at 95–104 (PSSGSLHFGH). A 'KMSKS' region motif is present at residues 281-285 (KMSAS).

It belongs to the class-I aminoacyl-tRNA synthetase family.

It is found in the cytoplasm. It catalyses the reaction tRNA(Trp) + L-tryptophan + ATP = L-tryptophyl-tRNA(Trp) + AMP + diphosphate + H(+). The protein is Tryptophan--tRNA ligase, cytoplasmic (trpS) of Dictyostelium discoideum (Social amoeba).